A 474-amino-acid polypeptide reads, in one-letter code: 3-isopropylmalate dehydratase large subunit (474 aa).

[4Fe-4S] cluster contacts are provided by cysteine 353, cysteine 414, and cysteine 417.

Belongs to the aconitase/IPM isomerase family. LeuC type 1 subfamily. Heterodimer of LeuC and LeuD. It depends on [4Fe-4S] cluster as a cofactor.

The enzyme catalyses (2R,3S)-3-isopropylmalate = (2S)-2-isopropylmalate. The protein operates within amino-acid biosynthesis; L-leucine biosynthesis; L-leucine from 3-methyl-2-oxobutanoate: step 2/4. Its function is as follows. Catalyzes the isomerization between 2-isopropylmalate and 3-isopropylmalate, via the formation of 2-isopropylmaleate. This chain is 3-isopropylmalate dehydratase large subunit, found in Xylella fastidiosa (strain 9a5c).